A 286-amino-acid polypeptide reads, in one-letter code: uncharacterized protein (286 aa).

This is an uncharacterized protein from Acidianus sp. F28 (AFV-2).